A 428-amino-acid chain; its full sequence is Acetyltransferase sirH (428 aa).

A glycan (N-linked (GlcNAc...) asparagine) is linked at Asn8. 6 consecutive transmembrane segments (helical) span residues 33–53 (LLTPIFMAVAVLTTLPPPGPL), 55–75 (VIVGLTAFTSLWLHVLTHWVS), 78–98 (AFFMDAIFMISITVRWLLMFV), 305–325 (LYVGFLVSGVQHYACALLIPS), 329–349 (GWGMFWQMPAYAAVVTVEDIL), and 366–386 (FLGYIWTAYWMTLIYALPVGF).

Belongs to the wax synthase family.

It localises to the membrane. The protein operates within polyketide biosynthesis. Acetyltransferase; part of the gene cluster that mediates the biosynthesis of asperlin, a polyketide showing anti-inflammatory, antitumor and antibiotic activities. The first step of the asperlin biosynthesis is the production of the intermediate 2,4,6-octatrienoic acid by the highly redusing polyketide synthase alnA with cleavage of the PKS product by the esterase alnB. 2,4,6-octatrienoic acid is further converted to asperlin via several steps involving the remaining enzymes from the cluster. This chain is Acetyltransferase sirH, found in Emericella nidulans (strain FGSC A4 / ATCC 38163 / CBS 112.46 / NRRL 194 / M139) (Aspergillus nidulans).